The following is a 195-amino-acid chain: Imidazoleglycerol-phosphate dehydratase (195 aa).

It belongs to the imidazoleglycerol-phosphate dehydratase family.

Its subcellular location is the cytoplasm. It carries out the reaction D-erythro-1-(imidazol-4-yl)glycerol 3-phosphate = 3-(imidazol-4-yl)-2-oxopropyl phosphate + H2O. The protein operates within amino-acid biosynthesis; L-histidine biosynthesis; L-histidine from 5-phospho-alpha-D-ribose 1-diphosphate: step 6/9. The sequence is that of Imidazoleglycerol-phosphate dehydratase from Nitrosomonas eutropha (strain DSM 101675 / C91 / Nm57).